The following is a 30-amino-acid chain: Cycloviolacin-O10 (30 aa).

A cross-link (cyclopeptide (Gly-Asn)) is located at residues 1–30 (GIPCGESCVYIPCLTSAVGCSCKSKVCYRN). Intrachain disulfides connect Cys4-Cys20, Cys8-Cys22, and Cys13-Cys27.

This is a cyclic peptide. In terms of tissue distribution, expressed in petals and roots but not in leaves, petioles and runners (at protein level).

In terms of biological role, probably participates in a plant defense mechanism. In Viola odorata (Sweet violet), this protein is Cycloviolacin-O10.